Reading from the N-terminus, the 1094-residue chain is Formin-like protein 1 (1094 aa).

Disordered regions lie at residues 1–29 (MGNAAGSAEQPAGPTASPPKQPAVPKQPM), 173–199 (SGAEKSKPLDQSVEDLSKAPPSSVPKS), and 507–627 (AATP…GVKA). The N-myristoyl glycine moiety is linked to residue glycine 2. Position 7 is a phosphoserine (serine 7). Over residues 16–28 (ASPPKQPAVPKQP) the composition is skewed to pro residues. Residues 27-464 (QPMPAAGELE…SRRIPEPEKV (438 aa)) form the GBD/FH3 domain. Serine 184 bears the Phosphoserine mark. Residues 519-529 (RVSTDSPSTAE) are compositionally biased toward polar residues. 2 stretches are compositionally biased toward pro residues: residues 535-549 (ASPPPPPPPPPPPLP) and 559-610 (PSAP…PGGP). The FH2 domain maps to 627 to 1018 (AKKPIQTKFR…DTSGREEPPT (392 aa)). Serine 688 carries the phosphoserine modification. A compositionally biased stretch (basic and acidic residues) spans 1002–1017 (WKKEAAADTSGREEPP). A disordered region spans residues 1002–1094 (WKKEAAADTS…PLPVTTDLAL (93 aa)). Serine 1021 is modified (phosphoserine). The DAD domain maps to 1049–1082 (SDRDGAIEDIITDLRNQPYIRADTGRRSARRRPP).

Belongs to the formin homology family. As to quaternary structure, interacts with RAC1, PFN1 and PFN2. Interacts (activated by RAC1) with SRGAP2 (via SH3 domain); regulates the actin filament severing activity of FMNL1. In terms of processing, myristoylation mediates membrane localization. As to expression, highly expressed in the spleen, lymph node and bone marrow cells.

The protein resides in the cytoplasm. It is found in the cell membrane. The protein localises to the cytoplasmic vesicle. Its subcellular location is the phagosome. Functionally, plays a role in the regulation of cell morphology and cytoskeletal organization. Required in the cortical actin filament dynamics and cell shape. May play a role in the control of cell motility and survival of macrophages. In Mus musculus (Mouse), this protein is Formin-like protein 1 (Fmnl1).